A 714-amino-acid polypeptide reads, in one-letter code: Ribonucleoside-diphosphate reductase 2 subunit alpha (714 aa).

Substrate-binding positions include Thr-161, 177-178 (SC), Gly-206, 386-390 (NLCSE), and 588-592 (PTGSI). Residues Cys-178 and Cys-415 are joined by a disulfide bond. Residue Asn-386 is the Proton acceptor of the active site. Cys-388 serves as the catalytic Cysteine radical intermediate. Glu-390 functions as the Proton acceptor in the catalytic mechanism.

This sequence belongs to the ribonucleoside diphosphate reductase large chain family. As to quaternary structure, tetramer of two alpha and two beta subunits.

The enzyme catalyses a 2'-deoxyribonucleoside 5'-diphosphate + [thioredoxin]-disulfide + H2O = a ribonucleoside 5'-diphosphate + [thioredoxin]-dithiol. With respect to regulation, under complex allosteric control mediated by deoxynucleoside triphosphates and ATP binding. The type of nucleotide bound at the specificity site determines substrate preference. It seems probable that ATP makes the enzyme reduce CDP and UDP, dGTP favors ADP reduction and dTTP favors GDP reduction. Lacks the N-terminal activity site. In terms of biological role, provides the precursors necessary for DNA synthesis. Catalyzes the biosynthesis of deoxyribonucleotides from the corresponding ribonucleotides. R1E contains the binding sites for both substrates and allosteric effectors and carries out the actual reduction of the ribonucleotide. The chain is Ribonucleoside-diphosphate reductase 2 subunit alpha (nrdE) from Salmonella typhimurium (strain LT2 / SGSC1412 / ATCC 700720).